Reading from the N-terminus, the 375-residue chain is 23S rRNA (uracil(747)-C(5))-methyltransferase RlmC (375 aa).

Positions 3, 11, 14, and 87 each coordinate [4Fe-4S] cluster. 4 residues coordinate S-adenosyl-L-methionine: Q212, F241, E262, and N307. C334 (nucleophile) is an active-site residue.

The protein belongs to the class I-like SAM-binding methyltransferase superfamily. RNA M5U methyltransferase family. RlmC subfamily.

It catalyses the reaction uridine(747) in 23S rRNA + S-adenosyl-L-methionine = 5-methyluridine(747) in 23S rRNA + S-adenosyl-L-homocysteine + H(+). Functionally, catalyzes the formation of 5-methyl-uridine at position 747 (m5U747) in 23S rRNA. The chain is 23S rRNA (uracil(747)-C(5))-methyltransferase RlmC from Escherichia coli (strain SMS-3-5 / SECEC).